Here is a 234-residue protein sequence, read N- to C-terminus: uncharacterized protein (234 aa).

6 helical membrane-spanning segments follow: residues 5 to 23 (LFYI…LWSF), 38 to 60 (IPTA…GFWV), 73 to 92 (AHIQ…AHGW), 127 to 149 (AITL…YIWL), 170 to 192 (GVAI…TVIS), and 197 to 217 (TQAG…ALAF).

It localises to the cell membrane. This is an uncharacterized protein from Archaeoglobus fulgidus (strain ATCC 49558 / DSM 4304 / JCM 9628 / NBRC 100126 / VC-16).